We begin with the raw amino-acid sequence, 325 residues long: NADH-quinone oxidoreductase subunit H (325 aa).

Transmembrane regions (helical) follow at residues 11–31 (ILLT…CGAF), 81–101 (VIFT…FAIV), 114–134 (IGIL…LFAG), 154–174 (LSYE…AGSF), 186–206 (VWNV…GVAV), 237–257 (FFVG…TLFF), 265–285 (LPPF…FILI), and 304–324 (ICLP…LWQA).

Belongs to the complex I subunit 1 family. As to quaternary structure, NDH-1 is composed of 13 different subunits. Subunits NuoA, H, J, K, L, M, N constitute the membrane sector of the complex.

It localises to the cell inner membrane. The enzyme catalyses a quinone + NADH + 5 H(+)(in) = a quinol + NAD(+) + 4 H(+)(out). NDH-1 shuttles electrons from NADH, via FMN and iron-sulfur (Fe-S) centers, to quinones in the respiratory chain. The immediate electron acceptor for the enzyme in this species is believed to be ubiquinone. Couples the redox reaction to proton translocation (for every two electrons transferred, four hydrogen ions are translocated across the cytoplasmic membrane), and thus conserves the redox energy in a proton gradient. This subunit may bind ubiquinone. The polypeptide is NADH-quinone oxidoreductase subunit H (Shigella flexneri serotype 5b (strain 8401)).